The sequence spans 234 residues: Phosphatidylinositol phosphate synthase (234 aa).

The next 2 helical transmembrane spans lie at 28–48 (LTPD…ALVL) and 54–70 (LFPG…FDML). 31–34 (DAVT) provides a ligand contact to a CDP-1,2-diacyl-sn-glycerol. Mg(2+)-binding residues include aspartate 68 and aspartate 71. Positions 72, 76, and 82 each coordinate a CDP-1,2-diacyl-sn-glycerol. Positions 89 and 93 each coordinate Mg(2+). 4 consecutive transmembrane segments (helical) span residues 91 to 110 (ACDR…WVAF), 116 to 134 (LLVV…ISYI), 155 to 173 (RLII…FIAW), and 179 to 197 (VAMW…QRLY). Aspartate 93 functions as the Proton acceptor in the catalytic mechanism. Positions 211–234 (PSAPVRDDDAQGHPRSGDPGKTQR) are disordered. Residues 215–228 (VRDDDAQGHPRSGD) are compositionally biased toward basic and acidic residues.

This sequence belongs to the CDP-alcohol phosphatidyltransferase class-I family. Homodimer. The cofactor is Mg(2+).

It localises to the cell membrane. It carries out the reaction a CDP-1,2-diacyl-sn-glycerol + 1D-myo-inositol 3-phosphate = a 1,2-diacyl-sn-glycero-3-phospho-(1D-myo-inositol-3-phosphate) + CMP + H(+). The enzyme catalyses 1,2-di-(9Z-octadecenoyl)-sn-glycero-3-cytidine-5'-diphosphate + 1D-myo-inositol 3-phosphate = 1,2-di-(9Z-octadecenoyl)-sn-glycero-3-phospho-(1D-myo-inositol-3-phosphate) + CMP + H(+). It participates in phospholipid metabolism; phosphatidylinositol phosphate biosynthesis. Functionally, catalyzes the conjugation of the 1'-hydroxyl group of D-myo-inositol-3-phosphate (also named L-myo-inositol-1-phosphate) with a lipid tail of cytidine diphosphate diacylglycerol (CDP-DAG), forming phosphatidylinositol phosphate (PIP) and CMP. PIP is a precursor of phosphatidylinositol (PI) which is an essential lipid for mycobacteria required for formation of their cell wall. This chain is Phosphatidylinositol phosphate synthase, found in Mycobacterium marinum (strain ATCC BAA-535 / M).